Here is a 423-residue protein sequence, read N- to C-terminus: MASALEQFVNSVRQLSAQGQMTQLCELINKSGELLAKNLSHLDTVLGALDVQEHSLGVLAVLFVKFSMPSVPDFETLFSQVQLFISTCNGEHIRYATDTFAGLCHQLTNALVERKQPLRGIGILKQAIDKMQMNTNQLTSIHADLCQLCLLAKCFKPALPYLDVDMMDICKENGAYDAKHFLCYYYYGGMIYTGLKNFERALYFYEQAITTPAMAVSHIMLESYKKYILVSLILLGKVQQLPKYTSQIVGRFIKPLSNAYHELAQVYSTNNPSELRNLVNKHSETFTRDNNMGLVKQCLSSLYKKNIQRLTKTFLTLSLQDMASRVQLSGPQEAEKYVLHMIEDGEIFASINQKDGMVSFHDNPEKYNNPAMLHNIDQEMLKCIELDERLKAMDQEITVNPQFVQKSMGSQEDDSGNKPSSYS.

A2 bears the N-acetylalanine mark. In terms of domain architecture, PCI spans 197–365 (NFERALYFYE…GMVSFHDNPE (169 aa)). Residues 402–423 (QFVQKSMGSQEDDSGNKPSSYS) are disordered. 3 positions are modified to phosphoserine: S407, S410, and S423.

The protein belongs to the CSN3 family. Component of the CSN complex, composed of COPS1/GPS1, COPS2, COPS3, COPS4, COPS5, COPS6, COPS7 (COPS7A or COPS7B), COPS8 and COPS9 isoform 1. In the complex, it probably interacts directly with COPS1, COPS4, COPS8 and COPS9 isoform 1. Interacts with CK2 and PKD. Interacts with the translation initiation factor EIF3S6 and IKBKG. Interacts with ERCC6. As to expression, widely expressed. Expressed at high level in heart and skeletal muscle.

The protein resides in the cytoplasm. Its subcellular location is the nucleus. Component of the COP9 signalosome complex (CSN), a complex involved in various cellular and developmental processes. The CSN complex is an essential regulator of the ubiquitin (Ubl) conjugation pathway by mediating the deneddylation of the cullin subunits of SCF-type E3 ligase complexes, leading to decrease the Ubl ligase activity of SCF-type complexes such as SCF, CSA or DDB2. The complex is also involved in phosphorylation of p53/TP53, c-jun/JUN, IkappaBalpha/NFKBIA, ITPK1 and IRF8/ICSBP, possibly via its association with CK2 and PKD kinases. CSN-dependent phosphorylation of TP53 and JUN promotes and protects degradation by the Ubl system, respectively. In Homo sapiens (Human), this protein is COP9 signalosome complex subunit 3 (COPS3).